Here is a 201-residue protein sequence, read N- to C-terminus: Imidazoleglycerol-phosphate dehydratase (201 aa).

Belongs to the imidazoleglycerol-phosphate dehydratase family.

It is found in the cytoplasm. The catalysed reaction is D-erythro-1-(imidazol-4-yl)glycerol 3-phosphate = 3-(imidazol-4-yl)-2-oxopropyl phosphate + H2O. It participates in amino-acid biosynthesis; L-histidine biosynthesis; L-histidine from 5-phospho-alpha-D-ribose 1-diphosphate: step 6/9. In Prochlorococcus marinus (strain MIT 9301), this protein is Imidazoleglycerol-phosphate dehydratase.